The chain runs to 108 residues: Phosphoribosyl-ATP pyrophosphatase (108 aa).

It belongs to the PRA-PH family.

The protein localises to the cytoplasm. The catalysed reaction is 1-(5-phospho-beta-D-ribosyl)-ATP + H2O = 1-(5-phospho-beta-D-ribosyl)-5'-AMP + diphosphate + H(+). It participates in amino-acid biosynthesis; L-histidine biosynthesis; L-histidine from 5-phospho-alpha-D-ribose 1-diphosphate: step 2/9. The protein is Phosphoribosyl-ATP pyrophosphatase of Dechloromonas aromatica (strain RCB).